We begin with the raw amino-acid sequence, 124 residues long: Small ribosomal subunit protein uS12cy (124 aa).

It belongs to the universal ribosomal protein uS12 family. Part of the 30S ribosomal subunit.

It is found in the plastid. The protein localises to the chloroplast. In terms of biological role, with S4 and S5 plays an important role in translational accuracy. Located at the interface of the 30S and 50S subunits. In Olimarabidopsis pumila (Dwarf rocket), this protein is Small ribosomal subunit protein uS12cy (rps12-B).